Reading from the N-terminus, the 313-residue chain is Biotin synthase (313 aa).

Positions 28–258 (NFGNDIELCS…LFPQARLRLS (231 aa)) constitute a Radical SAM core domain. C46, C50, and C53 together coordinate [4Fe-4S] cluster. [2Fe-2S] cluster contacts are provided by C90, C121, C181, and R256.

This sequence belongs to the radical SAM superfamily. Biotin synthase family. In terms of assembly, homodimer. Requires [4Fe-4S] cluster as cofactor. [2Fe-2S] cluster serves as cofactor.

The catalysed reaction is (4R,5S)-dethiobiotin + (sulfur carrier)-SH + 2 reduced [2Fe-2S]-[ferredoxin] + 2 S-adenosyl-L-methionine = (sulfur carrier)-H + biotin + 2 5'-deoxyadenosine + 2 L-methionine + 2 oxidized [2Fe-2S]-[ferredoxin]. Its pathway is cofactor biosynthesis; biotin biosynthesis; biotin from 7,8-diaminononanoate: step 2/2. Catalyzes the conversion of dethiobiotin (DTB) to biotin by the insertion of a sulfur atom into dethiobiotin via a radical-based mechanism. In Francisella tularensis subsp. mediasiatica (strain FSC147), this protein is Biotin synthase.